Reading from the N-terminus, the 244-residue chain is UDP-2,3-diacylglucosamine hydrolase (244 aa).

Mn(2+) is bound by residues D8, H10, D41, N79, and H114. Residue N79–R80 coordinates substrate. 5 residues coordinate substrate: D122, S160, N164, K167, and H195. H195 and H197 together coordinate Mn(2+).

The protein belongs to the LpxH family. Mn(2+) serves as cofactor.

It localises to the cell inner membrane. The catalysed reaction is UDP-2-N,3-O-bis[(3R)-3-hydroxytetradecanoyl]-alpha-D-glucosamine + H2O = 2-N,3-O-bis[(3R)-3-hydroxytetradecanoyl]-alpha-D-glucosaminyl 1-phosphate + UMP + 2 H(+). Its pathway is glycolipid biosynthesis; lipid IV(A) biosynthesis; lipid IV(A) from (3R)-3-hydroxytetradecanoyl-[acyl-carrier-protein] and UDP-N-acetyl-alpha-D-glucosamine: step 4/6. Its function is as follows. Hydrolyzes the pyrophosphate bond of UDP-2,3-diacylglucosamine to yield 2,3-diacylglucosamine 1-phosphate (lipid X) and UMP by catalyzing the attack of water at the alpha-P atom. Involved in the biosynthesis of lipid A, a phosphorylated glycolipid that anchors the lipopolysaccharide to the outer membrane of the cell. The chain is UDP-2,3-diacylglucosamine hydrolase from Hahella chejuensis (strain KCTC 2396).